The following is a 385-amino-acid chain: Methionine aminopeptidase 1 (385 aa).

The C6H2-type zinc finger occupies 6 to 59; the sequence is SRVCETEGCSSEAKLQCPTCIKLGIQGSYFCSQECFKGSWATHKLLHKKAKDDK. 8 residues coordinate Zn(2+): cysteine 9, cysteine 14, cysteine 22, cysteine 25, cysteine 36, cysteine 40, histidine 48, and histidine 52. An a protein-binding site is contributed by histidine 203. Positions 220, 231, and 294 each coordinate Zn(2+). Histidine 301 is a binding site for a protein. Glutamate 327 and glutamate 358 together coordinate Zn(2+).

This sequence belongs to the peptidase M24A family. Methionine aminopeptidase type 1 subfamily. Associates with the 60S ribosomal subunit of the 80S translational complex. Zn(2+) serves as cofactor. The cofactor is Co(2+). Requires Mn(2+) as cofactor. Fe(2+) is required as a cofactor.

The protein resides in the cytoplasm. It carries out the reaction Release of N-terminal amino acids, preferentially methionine, from peptides and arylamides.. Cotranslationally removes the N-terminal methionine from nascent proteins. The N-terminal methionine is often cleaved when the second residue in the primary sequence is small and uncharged (Met-Ala-, Cys, Gly, Pro, Ser, Thr, or Val). This is Methionine aminopeptidase 1 (metap1) from Xenopus laevis (African clawed frog).